A 301-amino-acid polypeptide reads, in one-letter code: uncharacterized protein (301 aa).

Catalysis depends on charge relay system residues Ser-44 and Tyr-107. Catalysis depends on Tyr-133, which acts as the Proton donor. Catalysis depends on Lys-162, which acts as the Schiff-base intermediate with substrate.

This sequence belongs to the DapA family. In terms of assembly, homotetramer.

It is found in the cytoplasm. This is an uncharacterized protein from Pyrobaculum arsenaticum (strain DSM 13514 / JCM 11321 / PZ6).